A 129-amino-acid polypeptide reads, in one-letter code: UPF0102 protein RD1_1191 (129 aa).

This sequence belongs to the UPF0102 family.

This chain is UPF0102 protein RD1_1191, found in Roseobacter denitrificans (strain ATCC 33942 / OCh 114) (Erythrobacter sp. (strain OCh 114)).